Consider the following 121-residue polypeptide: Ribonuclease P protein component (121 aa).

The protein belongs to the RnpA family. In terms of assembly, consists of a catalytic RNA component (M1 or rnpB) and a protein subunit.

It catalyses the reaction Endonucleolytic cleavage of RNA, removing 5'-extranucleotides from tRNA precursor.. In terms of biological role, RNaseP catalyzes the removal of the 5'-leader sequence from pre-tRNA to produce the mature 5'-terminus. It can also cleave other RNA substrates such as 4.5S RNA. The protein component plays an auxiliary but essential role in vivo by binding to the 5'-leader sequence and broadening the substrate specificity of the ribozyme. This chain is Ribonuclease P protein component, found in Nitrosomonas eutropha (strain DSM 101675 / C91 / Nm57).